Reading from the N-terminus, the 79-residue chain is uncharacterized protein (79 aa).

Residues 1–19 (MKYVALAFVLSLVILQISA) form the signal peptide. Residues 52 to 71 (RGRKSRTQSGRNQGKSTSDS) are disordered. Over residues 58 to 71 (TQSGRNQGKSTSDS) the composition is skewed to polar residues.

As to expression, nacreous layer of shell (at protein level). Expressed primarily in the mantle with highest level in the mantle pallium and lower level in the mantle edge.

The protein resides in the secreted. This is an uncharacterized protein from Margaritifera margaritifera (Freshwater pearl mussel).